The primary structure comprises 797 residues: Calcium-transporting ATPase CtpE (797 aa).

Helical transmembrane passes span 55–75, 215–235, and 254–274; these read LLLIVLATGSLINGMFGLLII, ILQFITYLLVPAGLLTIYTQL, and VPMVPEGLVLMTSIAFAVGVV. Residue Asp-301 is the 4-aspartylphosphate intermediate of the active site. The Mg(2+) site is built by Asp-301, Thr-303, and Asp-536. A run of 6 helical transmembrane segments spans residues 601-621, 633-653, 667-687, 703-723, 729-749, and 764-784; these read TVYSVLLALLVGIECLIAIPL, IHVTIAAWFTIGIPAFILSLA, VMTSAVPFGLVIGVATFVTYL, ASTAALITLLMTALWVLAVIA, WRLALVLPSGLAYVVIFSLPL, and TSIALAVGVVGAATIEAMWWI.

Belongs to the cation transport ATPase (P-type) (TC 3.A.3) family.

It localises to the cell membrane. The catalysed reaction is Ca(2+)(in) + ATP + H2O = Ca(2+)(out) + ADP + phosphate + H(+). Functionally, P-type ATPase involved in specific uptake of calcium. The protein is Calcium-transporting ATPase CtpE (ctpE) of Mycobacterium tuberculosis (strain CDC 1551 / Oshkosh).